The primary structure comprises 145 residues: 3-hydroxyacyl-[acyl-carrier-protein] dehydratase FabZ (145 aa).

H49 is a catalytic residue.

This sequence belongs to the thioester dehydratase family. FabZ subfamily.

Its subcellular location is the cytoplasm. It carries out the reaction a (3R)-hydroxyacyl-[ACP] = a (2E)-enoyl-[ACP] + H2O. Functionally, involved in unsaturated fatty acids biosynthesis. Catalyzes the dehydration of short chain beta-hydroxyacyl-ACPs and long chain saturated and unsaturated beta-hydroxyacyl-ACPs. This is 3-hydroxyacyl-[acyl-carrier-protein] dehydratase FabZ from Ehrlichia ruminantium (strain Welgevonden).